A 976-amino-acid chain; its full sequence is Metabotropic glutamate receptor (976 aa).

The signal sequence occupies residues Met-1–Leu-25. At Lys-26–Phe-626 the chain is on the extracellular side. Asn-112 and Asn-143 each carry an N-linked (GlcNAc...) asparagine glycan. Residues Ser-158 and Ala-179 to Thr-181 contribute to the L-glutamate site. The N-linked (GlcNAc...) asparagine glycan is linked to Asn-216. Tyr-229 contributes to the L-glutamate binding site. Asn-299 carries N-linked (GlcNAc...) asparagine glycosylation. Asp-310 is an L-glutamate binding site. The N-linked (GlcNAc...) asparagine glycan is linked to Asn-386. Lys-417 lines the L-glutamate pocket. N-linked (GlcNAc...) asparagine glycans are attached at residues Asn-491 and Asn-524. A helical membrane pass occupies residues Ala-627 to Ala-649. The Cytoplasmic portion of the chain corresponds to Lys-650 to Glu-663. The chain crosses the membrane as a helical span at residues Leu-664–Ala-684. Topologically, residues Lys-685–Arg-695 are extracellular. A helical membrane pass occupies residues Phe-696 to Asn-714. The Cytoplasmic segment spans residues Arg-715–Gln-738. Residues Val-739–Val-759 traverse the membrane as a helical segment. The Extracellular segment spans residues Glu-760–Asp-782. The chain crosses the membrane as a helical span at residues Met-783–Ile-804. Residues Lys-805–Lys-817 are Cytoplasmic-facing. A helical membrane pass occupies residues Phe-818–Thr-840. The Extracellular portion of the chain corresponds to Gly-841–Thr-850. The chain crosses the membrane as a helical span at residues Leu-851–Phe-876. Residues His-877–Lys-976 are Cytoplasmic-facing. Residues Leu-920 to Ser-946 form a disordered region. Over residues Thr-927–Ser-946 the composition is skewed to polar residues.

Belongs to the G-protein coupled receptor 3 family. Expressed in the neurons of the larval CNS from the beginning of the first until the third instar. Expression in the third-instar larval CNS is restricted to a discrete number of somas and projections in the brain lobes and in the ventral ganglion. In the ventral nerve cord, expression is detected both in somas and projections. Expressed in the antennal lobes, the optic lobes, the central complex and the median bundle in the adult CNS.

Its subcellular location is the cell membrane. In terms of biological role, G-protein coupled receptor for glutamate. Ligand binding causes a conformation change that triggers signaling via guanine nucleotide-binding proteins (G proteins) and modulates the activity of down-stream effectors. This chain is Metabotropic glutamate receptor (mGluR), found in Drosophila melanogaster (Fruit fly).